The chain runs to 250 residues: 1-(5-phosphoribosyl)-5-[(5-phosphoribosylamino)methylideneamino] imidazole-4-carboxamide isomerase (250 aa).

The Proton acceptor role is filled by Asp12. Catalysis depends on Asp134, which acts as the Proton donor.

It belongs to the HisA/HisF family.

Its subcellular location is the cytoplasm. It carries out the reaction 1-(5-phospho-beta-D-ribosyl)-5-[(5-phospho-beta-D-ribosylamino)methylideneamino]imidazole-4-carboxamide = 5-[(5-phospho-1-deoxy-D-ribulos-1-ylimino)methylamino]-1-(5-phospho-beta-D-ribosyl)imidazole-4-carboxamide. It participates in amino-acid biosynthesis; L-histidine biosynthesis; L-histidine from 5-phospho-alpha-D-ribose 1-diphosphate: step 4/9. The polypeptide is 1-(5-phosphoribosyl)-5-[(5-phosphoribosylamino)methylideneamino] imidazole-4-carboxamide isomerase (Actinobacillus pleuropneumoniae serotype 5b (strain L20)).